The sequence spans 781 residues: AP-3 complex subunit beta (781 aa).

5 HEAT repeats span residues 113-151 (PNLA…ASLY), 153-186 (IILH…EQGI), 187-224 (SIKD…QELQ), 294-332 (DHDL…PKTF), and 521-559 (PRIC…HDVD). Disordered regions lie at residues 694–713 (KPKR…TSSH) and 731–781 (ARQS…ETTE). The segment covering 699–712 (ASVSSVPSNTFTSS) has biased composition (polar residues). Over residues 746-758 (STSEETDHTDDES) the composition is skewed to acidic residues. The segment covering 759 to 774 (GSSSGDESTESSYVSS) has biased composition (low complexity).

This sequence belongs to the adaptor complexes large subunit family. Adaptor protein complex 3 (AP-3) is a heterotetramer composed of 2 large adaptins (APL5 and APL6), a medium adaptin (APM3) and a small adaptin (APS3).

Its subcellular location is the golgi apparatus. The protein resides in the cytoplasmic vesicle. The protein localises to the clathrin-coated vesicle membrane. Functionally, part of the AP-3 complex, an adaptor-related complex which is not clathrin-associated. The complex is associated with the Golgi region as well as more peripheral structures. It facilitates the budding of vesicles from the Golgi membrane and may be directly involved in trafficking to the vacuole. In Eremothecium gossypii (strain ATCC 10895 / CBS 109.51 / FGSC 9923 / NRRL Y-1056) (Yeast), this protein is AP-3 complex subunit beta (APL6).